The primary structure comprises 347 residues: Single-pass membrane and coiled-coil domain-containing protein 2 (347 aa).

The disordered stretch occupies residues 1-89 (MMSLQLGTAG…PPSKPDEQEV (89 aa)). Basic and acidic residues-rich tracts occupy residues 10–21 (GKERQLAEKSRD), 36–51 (EMDH…DKPS), and 60–86 (YKMD…KPDE). Residues 139–238 (DWLERINNII…MNVLNSKLEM (100 aa)) are a coiled coil. Ser178 carries the post-translational modification Phosphoserine. Residues 243 to 274 (GSDADSHNSEDVDTEQEEPLVPEASPSLSASP) are disordered. Residues 253 to 262 (DVDTEQEEPL) show a composition bias toward acidic residues. Residues 263-273 (VPEASPSLSAS) show a composition bias toward low complexity. A helical transmembrane segment spans residues 288 to 308 (LFVIVYVVTITGLSCYILFVD).

The protein localises to the membrane. The sequence is that of Single-pass membrane and coiled-coil domain-containing protein 2 (Smco2) from Mus musculus (Mouse).